We begin with the raw amino-acid sequence, 203 residues long: E3 ubiquitin-protein ligase RNF152 (203 aa).

The RING-type zinc-finger motif lies at 12-55 (CQICFNYYSPRRRPKLLDCKHTCCSVCLQQMRTSQKDVRCPWCR). Residues 106 to 165 (ISKERTLLPGDMGCRLLPGSQQKSLTVVTIPAEQQPLQGGAPQEAVEEEPDRRGVAKSST) are necessary for interaction with RRAGA. Residues 140–159 (QPLQGGAPQEAVEEEPDRRG) are disordered. Residues 167-187 (SGVCTVILVACVLVFLLGIVL) traverse the membrane as a helical segment.

Belongs to the RNF152 family. Interacts with RRAGA (inactive GDP-bound form); stimulated by amino acid starvation. Interacts with SEC16A. Ubiquitinated. Autoubiquitinated in vitro, leading to its degradation by the proteasome.

It is found in the lysosome membrane. The enzyme catalyses S-ubiquitinyl-[E2 ubiquitin-conjugating enzyme]-L-cysteine + [acceptor protein]-L-lysine = [E2 ubiquitin-conjugating enzyme]-L-cysteine + N(6)-ubiquitinyl-[acceptor protein]-L-lysine.. It participates in protein modification; protein ubiquitination. E3 ubiquitin-protein ligase that acts as a negative regulator of mTORC1 signaling by mediating ubiquitination of RagA/RRAGA and RHEB. Catalyzes 'Lys-63'-linked polyubiquitination of RagA/RRAGA in response to amino acid starvation, thereby regulating mTORC1 signaling. Also mediates monoubiquitination of RHEB, promoting its association with the TSC-TBC complex and subsequent inhibition. Also mediates 'Lys-48'-linked polyubiquitination of target proteins and their subsequent targeting to the proteasome for degradation. Induces apoptosis when overexpressed. The chain is E3 ubiquitin-protein ligase RNF152 from Rattus norvegicus (Rat).